A 267-amino-acid chain; its full sequence is 5'-nucleotidase SurE (267 aa).

A divalent metal cation contacts are provided by D9, D10, S40, and N97.

Belongs to the SurE nucleotidase family. A divalent metal cation is required as a cofactor.

Its subcellular location is the cytoplasm. The catalysed reaction is a ribonucleoside 5'-phosphate + H2O = a ribonucleoside + phosphate. Its function is as follows. Nucleotidase that shows phosphatase activity on nucleoside 5'-monophosphates. In Helicobacter pylori (strain J99 / ATCC 700824) (Campylobacter pylori J99), this protein is 5'-nucleotidase SurE.